The sequence spans 197 residues: GTP cyclohydrolase-2 (197 aa).

49-53 serves as a coordination point for GTP; sequence RVHSE. Residues cysteine 54, cysteine 65, and cysteine 67 each coordinate Zn(2+). GTP contacts are provided by residues glutamine 70, 92–94, and threonine 114; that span reads EGR. Aspartate 126 acts as the Proton acceptor in catalysis. Residue arginine 128 is the Nucleophile of the active site. Residues threonine 149 and lysine 154 each contribute to the GTP site.

It belongs to the GTP cyclohydrolase II family. As to quaternary structure, homodimer. The cofactor is Zn(2+).

The enzyme catalyses GTP + 4 H2O = 2,5-diamino-6-hydroxy-4-(5-phosphoribosylamino)-pyrimidine + formate + 2 phosphate + 3 H(+). Its pathway is cofactor biosynthesis; riboflavin biosynthesis; 5-amino-6-(D-ribitylamino)uracil from GTP: step 1/4. In terms of biological role, catalyzes the conversion of GTP to 2,5-diamino-6-ribosylamino-4(3H)-pyrimidinone 5'-phosphate (DARP), formate and pyrophosphate. This Cronobacter sakazakii (strain ATCC BAA-894) (Enterobacter sakazakii) protein is GTP cyclohydrolase-2.